A 675-amino-acid polypeptide reads, in one-letter code: L-type lectin-domain containing receptor kinase IX.2 (675 aa).

The first 35 residues, 1-35 (MLYFIFCQNLSSSSSMSNSILFLSLFLFLPFVVDS), serve as a signal peptide directing secretion. 8 N-linked (GlcNAc...) asparagine glycosylation sites follow: N9, N39, N110, N146, N179, N186, N191, and N212. A legume-lectin like region spans residues 36-269 (LYFNFTSFRQ…EEHRLLSWEL (234 aa)). At 36–281 (LYFNFTSFRQ…SLDSDKADSR (246 aa)) the chain is on the extracellular side. The chain crosses the membrane as a helical span at residues 282-302 (IGLVIGISASGFVFLTFMVIT). The Cytoplasmic portion of the chain corresponds to 303–675 (TVVVWSRKQR…VTFSGIEYGR (373 aa)). In terms of domain architecture, Protein kinase spans 350-631 (FSSHRKLGEG…KQGIQVMNFE (282 aa)). ATP contacts are provided by residues 356–364 (LGEGGFGAV) and K379. The active-site Proton acceptor is the D475.

The protein in the C-terminal section; belongs to the protein kinase superfamily. Ser/Thr protein kinase family. This sequence in the N-terminal section; belongs to the leguminous lectin family. In terms of assembly, interacts with ABCG40.

It is found in the cell membrane. The enzyme catalyses L-seryl-[protein] + ATP = O-phospho-L-seryl-[protein] + ADP + H(+). The catalysed reaction is L-threonyl-[protein] + ATP = O-phospho-L-threonyl-[protein] + ADP + H(+). Promotes hydrogen peroxide H(2)O(2) production and cell death. In terms of biological role, involved in resistance response to the pathogenic oomycetes Phytophthora infestans and Phytophthora capsici. The polypeptide is L-type lectin-domain containing receptor kinase IX.2 (Arabidopsis thaliana (Mouse-ear cress)).